The sequence spans 659 residues: DNA ligase (659 aa).

Residues 32–36, 81–82, and E111 contribute to the NAD(+) site; these read DFEYD and SL. The N6-AMP-lysine intermediate role is filled by K113. The NAD(+) site is built by R134, E168, K280, and K304. Zn(2+)-binding residues include C398, C401, C416, and C421. The BRCT domain maps to 585–655; the sequence is ETNSIYFQKR…KELNIPIINE (71 aa).

The protein belongs to the NAD-dependent DNA ligase family. LigA subfamily. Mg(2+) is required as a cofactor. The cofactor is Mn(2+).

It catalyses the reaction NAD(+) + (deoxyribonucleotide)n-3'-hydroxyl + 5'-phospho-(deoxyribonucleotide)m = (deoxyribonucleotide)n+m + AMP + beta-nicotinamide D-nucleotide.. Functionally, DNA ligase that catalyzes the formation of phosphodiester linkages between 5'-phosphoryl and 3'-hydroxyl groups in double-stranded DNA using NAD as a coenzyme and as the energy source for the reaction. It is essential for DNA replication and repair of damaged DNA. The sequence is that of DNA ligase from Mycoplasma genitalium (strain ATCC 33530 / DSM 19775 / NCTC 10195 / G37) (Mycoplasmoides genitalium).